The sequence spans 199 residues: MKFSPLLDELIQSLRCLPGVGPKSAQRMAFQLLERDRKAGLKLASALSSAMSDIGHCQSCRTYTEESLCPICASHKRGSSSTICVVETPADVLAIEAGGHFSGRYFVLLGHLSPLDGVGPEELGLALLERHLASGDVAELILATNPTVEGEATAHFIADMARRHKVVISRIAHGVPVGGELEYVDSTTLALSFNGRIPL.

The C4-type zinc finger occupies cysteine 57–cysteine 72. The Toprim domain maps to serine 81–proline 176.

This sequence belongs to the RecR family.

Functionally, may play a role in DNA repair. It seems to be involved in an RecBC-independent recombinational process of DNA repair. It may act with RecF and RecO. The polypeptide is Recombination protein RecR (Shewanella sp. (strain MR-4)).